A 776-amino-acid polypeptide reads, in one-letter code: 3-isopropylmalate dehydratase (776 aa).

The [4Fe-4S] cluster site is built by cysteine 357, cysteine 418, and cysteine 421. The segment covering 482–493 (SAPKVEVRHDTD) has biased composition (basic and acidic residues). 2 disordered regions span residues 482–518 (SAPK…SDVA) and 525–544 (DIPV…SADA). Residues 527 to 538 (PVSNSSTQSPGS) show a composition bias toward polar residues.

The protein belongs to the aconitase/IPM isomerase family. As to quaternary structure, monomer. [4Fe-4S] cluster serves as cofactor.

It catalyses the reaction (2R,3S)-3-isopropylmalate = (2S)-2-isopropylmalate. It participates in amino-acid biosynthesis; L-leucine biosynthesis; L-leucine from 3-methyl-2-oxobutanoate: step 2/4. In terms of biological role, catalyzes the isomerization between 2-isopropylmalate and 3-isopropylmalate, via the formation of 2-isopropylmaleate. This is 3-isopropylmalate dehydratase (LEU1) from Eremothecium gossypii (strain ATCC 10895 / CBS 109.51 / FGSC 9923 / NRRL Y-1056) (Yeast).